Consider the following 392-residue polypeptide: Outer membrane protein assembly factor BamB (392 aa).

Residues Met-1–Gly-19 form the signal peptide. Residue Cys-20 is the site of N-palmitoyl cysteine attachment. Cys-20 is lipidated: S-diacylglycerol cysteine.

It belongs to the BamB family. Part of the Bam complex, which is composed of the outer membrane protein BamA, and four lipoproteins BamB, BamC, BamD and BamE.

Its subcellular location is the cell outer membrane. Functionally, part of the outer membrane protein assembly complex, which is involved in assembly and insertion of beta-barrel proteins into the outer membrane. This chain is Outer membrane protein assembly factor BamB, found in Salmonella typhimurium (strain LT2 / SGSC1412 / ATCC 700720).